Here is a 418-residue protein sequence, read N- to C-terminus: UPF0754 membrane protein alr5253 (418 aa).

The next 2 helical transmembrane spans lie at 10-30 (WSHLWLYVSPPILGGIIGYFT) and 394-414 (IVSLGGILGLIVGLFQTAFFI).

This sequence belongs to the UPF0754 family.

The protein resides in the cell inner membrane. This is UPF0754 membrane protein alr5253 from Nostoc sp. (strain PCC 7120 / SAG 25.82 / UTEX 2576).